The sequence spans 552 residues: Probable glucomannan 4-beta-mannosyltransferase 10 (552 aa).

Residues 62–82 (IVPLFKCLVAFCLIISLLVFI) form a helical membrane-spanning segment. The active site involves aspartate 161. 2 residues coordinate substrate: aspartate 220 and aspartate 222. Aspartate 314 is an active-site residue. 4 helical membrane-spanning segments follow: residues 393–413 (IIVH…SVFF), 430–450 (ITLC…FWIL), 509–529 (EIMV…FGNT), and 530–550 (LLYL…VGFV).

Belongs to the glycosyltransferase 2 family. Plant cellulose synthase-like A subfamily.

It localises to the golgi apparatus membrane. The catalysed reaction is GDP-mannose + (glucomannan)n = GDP + (glucomannan)n+1.. In terms of biological role, probable mannan synthase which consists of a 4-beta-mannosyltransferase activity on mannan using GDP-mannose. The beta-1,4-mannan product is the backbone for galactomannan synthesis by galactomannan galactosyltransferase. Galactomannan is a noncellulosic polysaccharides of plant cell wall. This Arabidopsis thaliana (Mouse-ear cress) protein is Probable glucomannan 4-beta-mannosyltransferase 10.